A 224-amino-acid chain; its full sequence is Phosphoribosylformylglycinamidine synthase subunit PurQ (224 aa).

One can recognise a Glutamine amidotransferase type-1 domain in the interval 2 to 224 (TVAIIRFGGS…DGQGVLEGFR (223 aa)). The active-site Nucleophile is the C85. Residues H202 and E204 contribute to the active site. The segment at 204–224 (ERASLPDIGPTDGQGVLEGFR) is disordered.

Part of the FGAM synthase complex composed of 1 PurL, 1 PurQ and 2 PurS subunits.

The protein resides in the cytoplasm. It catalyses the reaction N(2)-formyl-N(1)-(5-phospho-beta-D-ribosyl)glycinamide + L-glutamine + ATP + H2O = 2-formamido-N(1)-(5-O-phospho-beta-D-ribosyl)acetamidine + L-glutamate + ADP + phosphate + H(+). The catalysed reaction is L-glutamine + H2O = L-glutamate + NH4(+). The protein operates within purine metabolism; IMP biosynthesis via de novo pathway; 5-amino-1-(5-phospho-D-ribosyl)imidazole from N(2)-formyl-N(1)-(5-phospho-D-ribosyl)glycinamide: step 1/2. Functionally, part of the phosphoribosylformylglycinamidine synthase complex involved in the purines biosynthetic pathway. Catalyzes the ATP-dependent conversion of formylglycinamide ribonucleotide (FGAR) and glutamine to yield formylglycinamidine ribonucleotide (FGAM) and glutamate. The FGAM synthase complex is composed of three subunits. PurQ produces an ammonia molecule by converting glutamine to glutamate. PurL transfers the ammonia molecule to FGAR to form FGAM in an ATP-dependent manner. PurS interacts with PurQ and PurL and is thought to assist in the transfer of the ammonia molecule from PurQ to PurL. This is Phosphoribosylformylglycinamidine synthase subunit PurQ from Natronomonas pharaonis (strain ATCC 35678 / DSM 2160 / CIP 103997 / JCM 8858 / NBRC 14720 / NCIMB 2260 / Gabara) (Halobacterium pharaonis).